The sequence spans 92 residues: Protein 10 (92 aa).

Positions 18 to 29 (FMQKYDKNSDQH) constitute an EF-hand domain.

Belongs to the calbindin family. As to expression, brain.

This Cavia porcellus (Guinea pig) protein is Protein 10.